The sequence spans 90 residues: MHDRCLKAWVTGRVQGVGFRAATRDQALTAGVTGYARNLPDGRVEVLLCGESSAVDRVVRWLWQGPPASRVTHVECEQAEDPPPGTFELG.

The Acylphosphatase-like domain occupies 5-90 (CLKAWVTGRV…DPPPGTFELG (86 aa)). Catalysis depends on residues Arg-20 and Asn-38.

Belongs to the acylphosphatase family.

The catalysed reaction is an acyl phosphate + H2O = a carboxylate + phosphate + H(+). The sequence is that of Acylphosphatase (acyP) from Chromohalobacter salexigens (strain ATCC BAA-138 / DSM 3043 / CIP 106854 / NCIMB 13768 / 1H11).